The following is a 103-amino-acid chain: Small ribosomal subunit protein uS10 (103 aa).

Belongs to the universal ribosomal protein uS10 family. In terms of assembly, part of the 30S ribosomal subunit.

Involved in the binding of tRNA to the ribosomes. In Xylella fastidiosa (strain 9a5c), this protein is Small ribosomal subunit protein uS10.